The primary structure comprises 1463 residues: Clustered mitochondria protein homolog (1463 aa).

The tract at residues 1–79 (MAKNKKQNGK…ETEQQQQQQE (79 aa)) is disordered. Residues 10–22 (KAKTPPVVAAAAG) are compositionally biased toward low complexity. The region spanning 374–616 (RAEDTFSSKL…RTFPPDVNFL (243 aa)) is the Clu domain. Disordered regions lie at residues 684-753 (AQKT…SEDA), 942-988 (GDGQ…SVPS), and 1387-1463 (QKEA…RRKS). Over residues 692–702 (KQAAIEAAAPA) the composition is skewed to low complexity. A compositionally biased stretch (basic and acidic residues) spans 703–731 (EGDKTPAKDAKDGKEAGKDANDGKEEGST). Over residues 955-964 (GGKKQNKQSK) the composition is skewed to basic residues. Over residues 965–980 (RGGGGGGGKGAAGGGR) the composition is skewed to gly residues. A compositionally biased stretch (low complexity) spans 1438–1456 (AEAASHTAGGAAANTAAPA).

Belongs to the CLU family.

The protein resides in the cytoplasm. In terms of biological role, mRNA-binding protein involved in proper cytoplasmic distribution of mitochondria. In Anopheles gambiae (African malaria mosquito), this protein is Clustered mitochondria protein homolog.